The primary structure comprises 334 residues: Transmembrane protein 41 homolog (334 aa).

A glycan (N-linked (GlcNAc...) asparagine) is linked at Asn43. The disordered stretch occupies residues 47-79 (KNKNNNIDNKKNSNNNNNNNNNNNNKNSISNNN). N-linked (GlcNAc...) asparagine glycosylation is present at Asn83. 6 helical membrane passes run 97 to 117 (LPLW…VFLF), 156 to 176 (FIVI…SIPG), 192 to 214 (VGFP…ISYY), 246 to 266 (IVFL…ASPL), 269 to 289 (VPIH…TFLA), and 305 to 325 (IFDL…ILPT).

This sequence belongs to the TMEM41 family.

It localises to the membrane. The sequence is that of Transmembrane protein 41 homolog from Dictyostelium discoideum (Social amoeba).